The chain runs to 109 residues: MENITFTSGLNSEMDANQPWRPWLSQTSRKAPDYKPYKRPADDEQHKLSIFKHPVKLFWPKSQCFDYLYEDAEVLLRNYPVQATICLYEDPDTEDEEDYSDEEDEKELR.

The segment covering 1-15 has biased composition (polar residues); it reads MENITFTSGLNSEMD. Disordered regions lie at residues 1 to 42 and 88 to 109; these read MENI…RPAD and YEDP…KELR. Residues 20-23 carry the WRPW motif motif; that stretch reads WRPW. A compositionally biased stretch (basic and acidic residues) spans 30 to 42; the sequence is KAPDYKPYKRPAD. The tract at residues 53–88 is ripply homology domain; that stretch reads HPVKLFWPKSQCFDYLYEDAEVLLRNYPVQATICLY. Residues 89-109 are compositionally biased toward acidic residues; sequence EDPDTEDEEDYSDEEDEKELR.

It belongs to the ripply family. In terms of tissue distribution, first expressed in the paraxial mesoderm at the 90% epiboly stage, and subsequently confined to the presomitic mesoderm. Expressed in the rostral compartment of S-I and S-II.

The protein resides in the nucleus. Plays a role in somitogenesis. Required for somite segregation and establishment of rostrocaudal polarity in somites. The sequence is that of Protein ripply2 from Danio rerio (Zebrafish).